A 462-amino-acid polypeptide reads, in one-letter code: Histidine--tRNA ligase (462 aa).

It belongs to the class-II aminoacyl-tRNA synthetase family. In terms of assembly, homodimer.

It localises to the cytoplasm. It carries out the reaction tRNA(His) + L-histidine + ATP = L-histidyl-tRNA(His) + AMP + diphosphate + H(+). The protein is Histidine--tRNA ligase of Trichormus variabilis (strain ATCC 29413 / PCC 7937) (Anabaena variabilis).